The chain runs to 361 residues: T-box-containing protein TBX6L (361 aa).

Residues 36–209 constitute a DNA-binding region (T-box); it reads LWMKFHQIGT…NNPFAKGFRE (174 aa). 2 disordered regions span residues 203 to 259 and 280 to 323; these read FAKG…VKEE and HAFP…QLPS. Composition is skewed to basic and acidic residues over residues 206 to 220 and 234 to 259; these read GFRE…EGRA and KLPE…VKEE. Positions 280–290 are enriched in low complexity; it reads HAFPAASPAPA.

The protein localises to the nucleus. May be involved in regulating somitogenesis. The sequence is that of T-box-containing protein TBX6L (TBX6L) from Gallus gallus (Chicken).